A 348-amino-acid chain; its full sequence is Protein RecA (348 aa).

71 to 78 (GVESSGKT) contacts ATP.

The protein belongs to the RecA family.

It is found in the cytoplasm. Its function is as follows. Can catalyze the hydrolysis of ATP in the presence of single-stranded DNA, the ATP-dependent uptake of single-stranded DNA by duplex DNA, and the ATP-dependent hybridization of homologous single-stranded DNAs. It interacts with LexA causing its activation and leading to its autocatalytic cleavage. The polypeptide is Protein RecA (Aquifex pyrophilus).